The primary structure comprises 342 residues: MAIKVGINGFGRIGRSFFRASWGREEIEIVAINDLTDAKHLAHLLKYDSVHGIFKGSVEAKDDSIVVDGKEIKVFAQKDPSQIPWGDLGVDVVIEATGVFRDRENASKHLQGGAKKVIITAPAKNPDITVVLGVNEEKYNPKEHNIISNASCTTNCLAPCVKVLNEAFGVEKGYMVTVHAYTNDQRLLDLPHKDFRRARAAAINIVPTTTGAAKAIGEVIPELKGKLDGTARRVPVPDGSLIDLTVVVNKAPSSVEEVNEKFREAAQKYRESGKVYLKEILQYCEDPIVSTDIVGNPHSAIFDAPLTQVIDNLVHIAAWYDNEWGYSCRLRDLVIYLAERGL.

Residues arginine 12–isoleucine 13, aspartate 34, lysine 78, and threonine 120 each bind NAD(+). D-glyceraldehyde 3-phosphate is bound by residues serine 151–threonine 153 and threonine 182. The active-site Nucleophile is cysteine 152. Asparagine 183 contacts NAD(+). D-glyceraldehyde 3-phosphate is bound by residues arginine 197, threonine 210–glycine 211, and arginine 233. Asparagine 322 contacts NAD(+).

The protein belongs to the glyceraldehyde-3-phosphate dehydrogenase family. Homotetramer.

It is found in the cytoplasm. It carries out the reaction D-glyceraldehyde 3-phosphate + phosphate + NAD(+) = (2R)-3-phospho-glyceroyl phosphate + NADH + H(+). The protein operates within carbohydrate degradation; glycolysis; pyruvate from D-glyceraldehyde 3-phosphate: step 1/5. Its function is as follows. Catalyzes the oxidative phosphorylation of glyceraldehyde 3-phosphate (G3P) to 1,3-bisphosphoglycerate (BPG) using the cofactor NAD. The first reaction step involves the formation of a hemiacetal intermediate between G3P and a cysteine residue, and this hemiacetal intermediate is then oxidized to a thioester, with concomitant reduction of NAD to NADH. The reduced NADH is then exchanged with the second NAD, and the thioester is attacked by a nucleophilic inorganic phosphate to produce BPG. This is Glyceraldehyde-3-phosphate dehydrogenase (gap) from Aquifex aeolicus (strain VF5).